A 257-amino-acid chain; its full sequence is Zinc transporter ZupT (257 aa).

Transmembrane regions (helical) follow at residues 5–25, 32–52, and 61–81; these read LILT…GVLG, LLAF…LMEM, and GMSP…YFGL. Fe(2+) is bound by residues Asn120 and Glu123. 2 residues coordinate Zn(2+): Glu123 and His148. 4 helical membrane-spanning segments follow: residues 137 to 157, 171 to 191, 195 to 215, and 236 to 256; these read LGFG…LAVA, ILWA…AWLI, MISP…MVAL, and GVLC…TVGI. Fe(2+)-binding residues include Asn149, Glu152, and Glu181. Glu152 provides a ligand contact to Zn(2+).

This sequence belongs to the ZIP transporter (TC 2.A.5) family. ZupT subfamily.

The protein resides in the cell inner membrane. The enzyme catalyses Zn(2+)(in) = Zn(2+)(out). Mediates zinc uptake. May also transport other divalent cations. This chain is Zinc transporter ZupT, found in Escherichia coli O81 (strain ED1a).